Here is a 75-residue protein sequence, read N- to C-terminus: Small ribosomal subunit protein bS18c (75 aa).

Belongs to the bacterial ribosomal protein bS18 family. Part of the 30S ribosomal subunit.

Its subcellular location is the plastid. The protein resides in the chloroplast. This is Small ribosomal subunit protein bS18c from Adiantum capillus-veneris (Maidenhair fern).